A 968-amino-acid chain; its full sequence is RNA polymerase-associated protein RapA (968 aa).

The 171-residue stretch at 164–334 (DVGRRHAPRV…FARLRLLDPN (171 aa)) folds into the Helicase ATP-binding domain. 177–184 (DEVGLGKT) is an ATP binding site. The DEAH box signature appears at 280 to 283 (DEAH). The region spanning 490–662 (RVEWLMGYLT…YLASPDQTEG (173 aa)) is the Helicase C-terminal domain.

It belongs to the SNF2/RAD54 helicase family. RapA subfamily. Interacts with the RNAP. Has a higher affinity for the core RNAP than for the holoenzyme. Its ATPase activity is stimulated by binding to RNAP.

Its function is as follows. Transcription regulator that activates transcription by stimulating RNA polymerase (RNAP) recycling in case of stress conditions such as supercoiled DNA or high salt concentrations. Probably acts by releasing the RNAP, when it is trapped or immobilized on tightly supercoiled DNA. Does not activate transcription on linear DNA. Probably not involved in DNA repair. This is RNA polymerase-associated protein RapA from Escherichia coli O9:H4 (strain HS).